The primary structure comprises 261 residues: Thiamine thiazole synthase (261 aa).

NAD(+) is bound by residues Ser40, 59 to 60 (ER), Gly67, Val133, and 159 to 161 (HID). Residues Asp161 and His176 each coordinate Fe cation. 2 residues coordinate NAD(+): Ser179 and Met226. Residue Arg236 participates in glycine binding.

Belongs to the THI4 family. Homooctamer; tetramer of dimers. Fe(2+) serves as cofactor.

The enzyme catalyses hydrogen sulfide + glycine + NAD(+) = ADP-5-ethyl-4-methylthiazole-2-carboxylate + nicotinamide + 3 H2O + H(+). It functions in the pathway cofactor biosynthesis; thiamine diphosphate biosynthesis. Its function is as follows. Involved in the biosynthesis of the thiazole moiety of thiamine. Catalyzes the conversion of NAD and glycine to adenosine diphosphate 5-(2-hydroxyethyl)-4-methylthiazole-2-carboxylate (ADT), an adenylated thiazole intermediate, using free sulfide as a source of sulfur. This chain is Thiamine thiazole synthase, found in Methanococcus maripaludis (strain C6 / ATCC BAA-1332).